The sequence spans 920 residues: Whirlin (920 aa).

The region spanning 141-224 is the PDZ 1 domain; sequence LVSLRRAKAH…LVLSVYSAGR (84 aa). A disordered region spans residues 241–262; sequence QGRSTSPPSSLPHGSTLRQHED. Positions 242-257 are enriched in polar residues; that stretch reads GRSTSPPSSLPHGSTL. The region spanning 278–360 is the PDZ 2 domain; sequence KVNLVLGDGR…LILTVKDVGR (83 aa). Disordered stretches follow at residues 502–536, 561–603, 630–730, and 752–828; these read MKAR…TSTT, CETT…QGHD, FSAP…AMGA, and RALP…PTST. Over residues 520–536 the composition is skewed to low complexity; sequence SYSDTGSSTGSHGTSTT. The segment covering 561–570 has biased composition (polar residues); it reads CETTQGSTNA. 2 stretches are compositionally biased toward pro residues: residues 589–598 and 636–651; these read IKPPPPPPPL and RSPP…PTPG. Polar residues predominate over residues 655-674; the sequence is ARDSPSSPIYASISHANPSS. Phosphoserine is present on Ser-698. Polar residues-rich tracts occupy residues 756 to 775 and 785 to 800; these read QTRT…TLSE and EAST…NTKN. The segment covering 802-813 has biased composition (basic and acidic residues); that stretch reads NGKELPQTERTT. In terms of domain architecture, PDZ 3 spans 829–912; sequence LIRVRKSAAT…TKERDYIDFL (84 aa).

As to quaternary structure, forms homooligomers. Interacts (via C-terminal PDZ domain) with MYO15A; this interaction is necessary for localization of WHRN to stereocilia tips. Interacts (via C-terminal PDZ domain) with MPP1/p55. Interacts with LRRC4C/NGL1. Interacts with MYO7A. Interacts with RPGR. Interacts with EPS8. Interacts with CASK. Interacts with CIB2. Component of USH2 complex, composed of ADGRV1, PDZD7, USH2A and WHRN. Interacts (via PDZ domains) with PDZD7; the interaction is direct. Interacts (via N-terminal PDZ domain) with USH2A (via cytoplasmic region). Interacts with ADGRV1/MASS1 (via cytoplasmic region). Ubiquitous. Highly expressed in heart, spleen, lung and liver. Highly expressed in brain, in the olfactory bulb, thalamus, layers III-V of the cerebral cortex and the molecular layer of cerebellum. Detected in soma and dendrites of thalamic neurons, and in cerebrum in cell bodies and apical dendrites of pyramidal neurons. Expressed in retina and inner ear.

Its subcellular location is the cytoplasm. It is found in the cell projection. The protein localises to the stereocilium. The protein resides in the growth cone. It localises to the synapse. Involved in hearing and vision as member of the USH2 complex. Necessary for elongation and maintenance of inner and outer hair cell stereocilia in the organ of Corti in the inner ear. Involved in the maintenance of the hair bundle ankle region, which connects stereocilia in cochlear hair cells of the inner ear. In retina photoreceptors, required for the maintenance of periciliary membrane complex that seems to play a role in regulating intracellular protein transport. This Rattus norvegicus (Rat) protein is Whirlin.